The following is a 190-amino-acid chain: Recombination protein RecR (190 aa).

The segment at 58–73 (CEQCGALSENELCEIC) adopts a C4-type zinc-finger fold. The region spanning 81 to 167 (NILCIVESPK…TFSKIAQGIP (87 aa)) is the Toprim domain.

This sequence belongs to the RecR family.

Its function is as follows. May play a role in DNA repair. It seems to be involved in an RecBC-independent recombinational process of DNA repair. It may act with RecF and RecO. This Campylobacter jejuni (strain RM1221) protein is Recombination protein RecR.